Here is a 548-residue protein sequence, read N- to C-terminus: Probable malate:quinone oxidoreductase (548 aa).

Residues 522-548 (KPQAADSTPKAQLKPQPARKEVADIAL) form a disordered region. Over residues 539 to 548 (ARKEVADIAL) the composition is skewed to basic and acidic residues.

This sequence belongs to the MQO family. Requires FAD as cofactor.

The enzyme catalyses (S)-malate + a quinone = a quinol + oxaloacetate. Its pathway is carbohydrate metabolism; tricarboxylic acid cycle; oxaloacetate from (S)-malate (quinone route): step 1/1. This chain is Probable malate:quinone oxidoreductase, found in Escherichia fergusonii (strain ATCC 35469 / DSM 13698 / CCUG 18766 / IAM 14443 / JCM 21226 / LMG 7866 / NBRC 102419 / NCTC 12128 / CDC 0568-73).